Here is a 316-residue protein sequence, read N- to C-terminus: tRNA-cytidine(32) 2-sulfurtransferase (316 aa).

The short motif at 58 to 63 is the PP-loop motif element; that stretch reads SGGKDS. Residues C133, C136, and C224 each contribute to the [4Fe-4S] cluster site.

It belongs to the TtcA family. In terms of assembly, homodimer. Requires Mg(2+) as cofactor. [4Fe-4S] cluster is required as a cofactor.

Its subcellular location is the cytoplasm. The enzyme catalyses cytidine(32) in tRNA + S-sulfanyl-L-cysteinyl-[cysteine desulfurase] + AH2 + ATP = 2-thiocytidine(32) in tRNA + L-cysteinyl-[cysteine desulfurase] + A + AMP + diphosphate + H(+). Its pathway is tRNA modification. Functionally, catalyzes the ATP-dependent 2-thiolation of cytidine in position 32 of tRNA, to form 2-thiocytidine (s(2)C32). The sulfur atoms are provided by the cysteine/cysteine desulfurase (IscS) system. In Aromatoleum aromaticum (strain DSM 19018 / LMG 30748 / EbN1) (Azoarcus sp. (strain EbN1)), this protein is tRNA-cytidine(32) 2-sulfurtransferase.